A 664-amino-acid polypeptide reads, in one-letter code: L-glutamate oxidase precursor (664 aa).

The tat-type signal signal peptide spans 1 to 44 (MTEDHAVVRSDGGLSRRSFAAVAGTATVATALTSGVAAALPAPA). FAD is bound by residues Ala-105, Glu-124, Ala-125, Arg-133, Met-161, Arg-162, Asp-638, Trp-646, and Ile-647.

The protein belongs to the flavin monoamine oxidase family. LGOX subfamily. As to quaternary structure, the mature enzyme is a heterohexamer composed of 2 alpha chains, 2 beta chains and 2 gamma chains (alpha2beta2gamma2). It depends on FAD as a cofactor. Post-translationally, predicted to be exported by the Tat system. The position of the signal peptide cleavage has not been experimentally proven. In terms of processing, the precursor form is proteolytically cleaved by an endopeptidase into alpha, beta and gamma chains, which form the stable mature enzyme.

It is found in the secreted. The catalysed reaction is L-glutamate + O2 + H2O = H2O2 + 2-oxoglutarate + NH4(+). Activity is stimulated in the presence of Mn(2+), Ca(2+) or Mg(2+). In terms of biological role, catalyzes the oxidative deamination of L-glutamate to 2-ketoglutarate along with the production of ammonia and hydrogen peroxide. This chain is L-glutamate oxidase precursor, found in Streptomyces viridosporus (strain ATCC 14672 / DSM 40746 / JCM 4963 / KCTC 9882 / NRRL B-12104 / FH 1290) (Streptomyces ghanaensis).